The primary structure comprises 144 residues: Acidic phospholipase A2 (144 aa).

A signal peptide spans 1–19 (MYPAHLLVLLAVCVSLLGA). A propeptide spanning residues 20 to 27 (SDIPPLPL) is cleaved from the precursor. 7 cysteine pairs are disulfide-bonded: Cys38–Cys98, Cys54–Cys143, Cys56–Cys72, Cys71–Cys125, Cys78–Cys118, Cys87–Cys111, and Cys105–Cys116. Ca(2+) contacts are provided by Tyr55, Gly57, and Gly59. The active site involves His75. Asp76 lines the Ca(2+) pocket. Asp119 is a catalytic residue.

Belongs to the phospholipase A2 family. Group I subfamily. D49 sub-subfamily. Requires Ca(2+) as cofactor. In terms of tissue distribution, expressed by the venom gland.

Its subcellular location is the secreted. It carries out the reaction a 1,2-diacyl-sn-glycero-3-phosphocholine + H2O = a 1-acyl-sn-glycero-3-phosphocholine + a fatty acid + H(+). In terms of biological role, PLA2 catalyzes the calcium-dependent hydrolysis of the 2-acyl groups in 3-sn-phosphoglycerides. The sequence is that of Acidic phospholipase A2 from Aipysurus laevis (Olive sea snake).